The primary structure comprises 866 residues: Dimethylglycine dehydrogenase, mitochondrial (866 aa).

The N-terminal 50 residues, 1 to 50 (MLRPGAQLLRGLLLRSCPLQGSPGRPRSVCGREGEEKPPLSAETQWKDRA), are a transit peptide targeting the mitochondrion. A disordered region spans residues 20 to 42 (QGSPGRPRSVCGREGEEKPPLSA). Residues 59–60 (CV), 80–81 (EK), and 87–95 (GSTWHAAGL) contribute to the FAD site. The residue at position 91 (His91) is a Tele-8alpha-FAD histidine. N6-acetyllysine is present on Lys114. Lys148 is modified (N6-acetyllysine; alternate). Lys148 carries the post-translational modification N6-succinyllysine; alternate. The residue at position 168 (Lys168) is an N6-acetyllysine. Residue Val219 participates in FAD binding. Lys223 is modified (N6-acetyllysine). Residue Trp251 participates in FAD binding. An N6-succinyllysine mark is found at Lys317 and Lys319. Residues Lys335 and Lys360 each carry the N6-acetyllysine modification. Position 397–402 (397–402 (FGYGII)) interacts with FAD. N6-acetyllysine; alternate is present on residues Lys434 and Lys523. Lys434 and Lys523 each carry N6-succinyllysine; alternate. 580–582 (ELT) provides a ligand contact to (6S)-5,6,7,8-tetrahydrofolate. Residue Lys655 is modified to N6-acetyllysine; alternate. Lys655 carries the post-translational modification N6-succinyllysine; alternate. (6S)-5,6,7,8-tetrahydrofolate contacts are provided by residues Tyr676, 683 to 685 (ELY), and Tyr744. Residue Lys764 is modified to N6-acetyllysine. Lys795 is modified (N6-succinyllysine).

The protein belongs to the GcvT family. As to quaternary structure, monomer. FAD serves as cofactor.

Its subcellular location is the mitochondrion. The enzyme catalyses (6S)-5,6,7,8-tetrahydrofolyl-(gamma-L-Glu)(n) + N,N-dimethylglycine + oxidized [electron-transfer flavoprotein] + H(+) = (6R)-5,10-methylenetetrahydrofolyl-(gamma-L-Glu)(n) + sarcosine + reduced [electron-transfer flavoprotein]. Its pathway is amine and polyamine degradation; betaine degradation; sarcosine from betaine: step 2/2. Its function is as follows. Catalyzes the demethylation of N,N-dimethylglycine to sarcosine. Also has activity with sarcosine in vitro. This is Dimethylglycine dehydrogenase, mitochondrial (DMGDH) from Homo sapiens (Human).